The following is a 1072-amino-acid chain: Teashirt homolog 3 (1072 aa).

Disordered stretches follow at residues 44 to 71, 130 to 153, and 228 to 247; these read ACPSYQNSPAAEFSSHEMDSESHISETS, PSSENNGGGSSSSSSSSSSSCGSG, and HYRDDNHETDNNNPKRWSKP. Over residues 57–71 the composition is skewed to basic and acidic residues; it reads SSHEMDSESHISETS. 2 C2H2-type zinc fingers span residues 204–228 and 265–289; these read FRCKDCSAAYDTLVELTVHMNETGH and LKCMYCGHSFESLQDLSVHMIKTKH. Basic and acidic residues predominate over residues 228–237; that stretch reads HYRDDNHETD. Residues 315–336 are disordered; sequence SLELELPSSPDSTGGTPKATLS. The segment at 376–400 adopts a C2H2-type 3; atypical zinc-finger fold; that stretch reads LKCMECGSSHDTLQELTAHMMVTGH. A compositionally biased stretch (basic and acidic residues) spans 469-481; it reads AVLDEKPKEKEKA. Disordered stretches follow at residues 469-489, 569-594, 616-690, 784-815, and 846-888; these read AVLDEKPKEKEKASEEEEKYD, NSEIVSPTKTQTLVSPPSSQTSPMPK, EKMK…PLSG, TKGKSDKGCSLGSGLLSPTSTSPATSSSTVTT, and TESH…RQSN. 2 stretches are compositionally biased toward polar residues: residues 571–593 and 649–660; these read EIVSPTKTQTLVSPPSSQTSPMP and SSGSGFKSQENS. Residue Ser-672 is modified to Phosphoserine. Composition is skewed to low complexity over residues 791–815 and 847–860; these read GCSLGSGLLSPTSTSPATSSSTVTT and ESHTSKSSTPSSIS. The segment at residues 882-952 is a DNA-binding region (homeobox; atypical); it reads RKGRQSNWNP…NVKYQLRRTG (71 aa). 2 C2H2-type zinc fingers span residues 967–989 and 1032–1055; these read FFCNDCASQIRTPSTYISHLESH and YQCKLCNRTFASKHAVKLHLSKTH.

The protein belongs to the teashirt C2H2-type zinc-finger protein family. In terms of assembly, interacts (via N-terminus) with HDAC1 and HDAC2; the interaction is direct. Found in a trimeric complex with APBB1 and HDAC1; the interaction between HDAC1 and APBB1 is mediated by TSHZ3. Interacts (via homeobox domain) with APBB1 (via PID domain 1). Expressed in cortical neurons.

Its subcellular location is the nucleus. The protein resides in the cell projection. The protein localises to the growth cone. Functionally, transcriptional regulator involved in developmental processes. Functions in association with APBB1, SET and HDAC factors as a transcriptional repressor, that inhibits the expression of CASP4. TSHZ3-mediated transcription repression involves the recruitment of histone deacetylases HDAC1 and HDAC2. Associates with chromatin in a region surrounding the CASP4 transcriptional start site(s). Regulates the development of neurons involved in both respiratory rhythm and airflow control. Promotes maintenance of nucleus ambiguus (nA) motoneurons, which govern upper airway function, and establishes a respiratory rhythm generator (RRG) activity compatible with survival at birth. Involved in the differentiation of the proximal uretic smooth muscle cells during developmental processes. Involved in the up-regulation of myocardin, that directs the expression of smooth muscle cells in the proximal ureter. Involved in the modulation of glutamatergic synaptic transmission and long-term synaptic potentiation. The chain is Teashirt homolog 3 (Tshz3) from Rattus norvegicus (Rat).